The chain runs to 157 residues: Endoribonuclease YbeY (157 aa).

3 residues coordinate Zn(2+): His118, His122, and His128.

Belongs to the endoribonuclease YbeY family. Requires Zn(2+) as cofactor.

It localises to the cytoplasm. In terms of biological role, single strand-specific metallo-endoribonuclease involved in late-stage 70S ribosome quality control and in maturation of the 3' terminus of the 16S rRNA. This is Endoribonuclease YbeY from Bordetella bronchiseptica (strain ATCC BAA-588 / NCTC 13252 / RB50) (Alcaligenes bronchisepticus).